We begin with the raw amino-acid sequence, 515 residues long: Maturase K (515 aa).

The protein belongs to the intron maturase 2 family. MatK subfamily.

It localises to the plastid. Its subcellular location is the chloroplast. Functionally, usually encoded in the trnK tRNA gene intron. Probably assists in splicing its own and other chloroplast group II introns. This chain is Maturase K, found in Pinus leiophylla (Chihuahua pine).